Here is a 433-residue protein sequence, read N- to C-terminus: D-amino acid dehydrogenase (433 aa).

3 to 17 (VLVLGSGVIGTTSAY) is an FAD binding site.

Belongs to the DadA oxidoreductase family. FAD serves as cofactor.

The catalysed reaction is a D-alpha-amino acid + A + H2O = a 2-oxocarboxylate + AH2 + NH4(+). It functions in the pathway amino-acid degradation; D-alanine degradation; NH(3) and pyruvate from D-alanine: step 1/1. Oxidative deamination of D-amino acids. The sequence is that of D-amino acid dehydrogenase from Pseudomonas savastanoi pv. phaseolicola (strain 1448A / Race 6) (Pseudomonas syringae pv. phaseolicola (strain 1448A / Race 6)).